A 198-amino-acid polypeptide reads, in one-letter code: tRNA (pseudouridine(54)-N(1))-methyltransferase (198 aa).

S-adenosyl-L-methionine-binding positions include Leu130, Gly153, 176 to 181 (LSPLEL), and Cys186.

Belongs to the methyltransferase superfamily. TrmY family. Homodimer.

The protein resides in the cytoplasm. It catalyses the reaction pseudouridine(54) in tRNA + S-adenosyl-L-methionine = N(1)-methylpseudouridine(54) in tRNA + S-adenosyl-L-homocysteine + H(+). Specifically catalyzes the N1-methylation of pseudouridine at position 54 (Psi54) in tRNAs. This is tRNA (pseudouridine(54)-N(1))-methyltransferase from Methanococcus maripaludis (strain C6 / ATCC BAA-1332).